The primary structure comprises 126 residues: Large ribosomal subunit protein bL12 (126 aa).

The protein belongs to the bacterial ribosomal protein bL12 family. In terms of assembly, homodimer. Part of the ribosomal stalk of the 50S ribosomal subunit. Forms a multimeric L10(L12)X complex, where L10 forms an elongated spine to which 2 to 4 L12 dimers bind in a sequential fashion. Binds GTP-bound translation factors.

Forms part of the ribosomal stalk which helps the ribosome interact with GTP-bound translation factors. Is thus essential for accurate translation. The sequence is that of Large ribosomal subunit protein bL12 from Elusimicrobium minutum (strain Pei191).